Here is a 535-residue protein sequence, read N- to C-terminus: Bifunctional purine biosynthesis protein PurH (535 aa).

Positions threonine 6 to valine 151 constitute an MGS-like domain.

Belongs to the PurH family.

The catalysed reaction is (6R)-10-formyltetrahydrofolate + 5-amino-1-(5-phospho-beta-D-ribosyl)imidazole-4-carboxamide = 5-formamido-1-(5-phospho-D-ribosyl)imidazole-4-carboxamide + (6S)-5,6,7,8-tetrahydrofolate. It catalyses the reaction IMP + H2O = 5-formamido-1-(5-phospho-D-ribosyl)imidazole-4-carboxamide. It participates in purine metabolism; IMP biosynthesis via de novo pathway; 5-formamido-1-(5-phospho-D-ribosyl)imidazole-4-carboxamide from 5-amino-1-(5-phospho-D-ribosyl)imidazole-4-carboxamide (10-formyl THF route): step 1/1. The protein operates within purine metabolism; IMP biosynthesis via de novo pathway; IMP from 5-formamido-1-(5-phospho-D-ribosyl)imidazole-4-carboxamide: step 1/1. The protein is Bifunctional purine biosynthesis protein PurH of Azotobacter vinelandii (strain DJ / ATCC BAA-1303).